Reading from the N-terminus, the 163-residue chain is Nucleotide-binding protein tll0793 (163 aa).

This sequence belongs to the YajQ family.

Nucleotide-binding protein. This chain is Nucleotide-binding protein tll0793, found in Thermosynechococcus vestitus (strain NIES-2133 / IAM M-273 / BP-1).